Here is a 994-residue protein sequence, read N- to C-terminus: Probable beta-galactosidase C (994 aa).

The signal sequence occupies residues Met-1–Ala-19. A substrate-binding site is contributed by Tyr-78. A glycan (N-linked (GlcNAc...) asparagine) is linked at Asn-88. Positions 123, 124, 125, and 183 each coordinate substrate. Glu-184 functions as the Proton donor in the catalytic mechanism. Tyr-247 contributes to the substrate binding site. An intrachain disulfide couples Cys-253 to Cys-301. The N-linked (GlcNAc...) asparagine glycan is linked to Asn-272. Glu-283 acts as the Nucleophile in catalysis. Substrate is bound at residue Tyr-350. 14 N-linked (GlcNAc...) asparagine glycosylation sites follow: Asn-388, Asn-407, Asn-433, Asn-500, Asn-514, Asn-521, Asn-584, Asn-600, Asn-674, Asn-712, Asn-717, Asn-757, Asn-861, and Asn-969.

It belongs to the glycosyl hydrolase 35 family.

The protein localises to the secreted. It catalyses the reaction Hydrolysis of terminal non-reducing beta-D-galactose residues in beta-D-galactosides.. Its function is as follows. Cleaves beta-linked terminal galactosyl residues from gangliosides, glycoproteins, and glycosaminoglycans. The sequence is that of Probable beta-galactosidase C (lacC) from Aspergillus niger (strain ATCC MYA-4892 / CBS 513.88 / FGSC A1513).